The primary structure comprises 334 residues: Nucleoid-associated protein YejK (334 aa).

The protein belongs to the YejK family.

The protein localises to the cytoplasm. The protein resides in the nucleoid. This chain is Nucleoid-associated protein YejK, found in Escherichia fergusonii (strain ATCC 35469 / DSM 13698 / CCUG 18766 / IAM 14443 / JCM 21226 / LMG 7866 / NBRC 102419 / NCTC 12128 / CDC 0568-73).